The following is a 485-amino-acid chain: Glutamyl-tRNA(Gln) amidotransferase subunit A (485 aa).

Catalysis depends on charge relay system residues K79 and S154. Catalysis depends on S178, which acts as the Acyl-ester intermediate.

The protein belongs to the amidase family. GatA subfamily. As to quaternary structure, heterotrimer of A, B and C subunits.

The catalysed reaction is L-glutamyl-tRNA(Gln) + L-glutamine + ATP + H2O = L-glutaminyl-tRNA(Gln) + L-glutamate + ADP + phosphate + H(+). In terms of biological role, allows the formation of correctly charged Gln-tRNA(Gln) through the transamidation of misacylated Glu-tRNA(Gln) in organisms which lack glutaminyl-tRNA synthetase. The reaction takes place in the presence of glutamine and ATP through an activated gamma-phospho-Glu-tRNA(Gln). The polypeptide is Glutamyl-tRNA(Gln) amidotransferase subunit A (Clostridium botulinum (strain Okra / Type B1)).